The chain runs to 534 residues: ATP synthase subunit alpha (534 aa).

170–177 serves as a coordination point for ATP; sequence GDRQTGKT. The tract at residues 505–534 is disordered; it reads HEDARVKSETAQAAGKDKDEKAAATAGAGK.

This sequence belongs to the ATPase alpha/beta chains family. As to quaternary structure, F-type ATPases have 2 components, CF(1) - the catalytic core - and CF(0) - the membrane proton channel. CF(1) has five subunits: alpha(3), beta(3), gamma(1), delta(1), epsilon(1). CF(0) has three main subunits: a(1), b(2) and c(9-12). The alpha and beta chains form an alternating ring which encloses part of the gamma chain. CF(1) is attached to CF(0) by a central stalk formed by the gamma and epsilon chains, while a peripheral stalk is formed by the delta and b chains.

It is found in the cell inner membrane. The catalysed reaction is ATP + H2O + 4 H(+)(in) = ADP + phosphate + 5 H(+)(out). Produces ATP from ADP in the presence of a proton gradient across the membrane. The alpha chain is a regulatory subunit. This Acidobacterium capsulatum (strain ATCC 51196 / DSM 11244 / BCRC 80197 / JCM 7670 / NBRC 15755 / NCIMB 13165 / 161) protein is ATP synthase subunit alpha.